A 547-amino-acid chain; its full sequence is 4-coumarate-CoA ligase 1 (547 aa).

ATP is bound by residues Ser190–Thr194, His238, Ala310–Pro312, Gln332–Gly333, Thr337, Asp421, Arg436, and Lys527. An SBD1 region spans residues Glu263–Gln332. The segment at Gly333–Tyr400 is SBD2.

It belongs to the ATP-dependent AMP-binding enzyme family. In terms of tissue distribution, mostly expressed in stems, and, to a lower extent, in bulbs.

It carries out the reaction (E)-4-coumarate + ATP + CoA = (E)-4-coumaroyl-CoA + AMP + diphosphate. The protein operates within phytoalexin biosynthesis; 3,4',5-trihydroxystilbene biosynthesis; 3,4',5-trihydroxystilbene from trans-4-coumarate: step 1/2. Produces CoA thioesters of a variety of hydroxy- and methoxy-substituted cinnamic acids, which are used to synthesize several phenylpropanoid-derived compounds, including anthocyanins, flavonoids, isoflavonoids, coumarins, lignin, suberin and wall-bound phenolics. This Narcissus pseudonarcissus (Daffodil) protein is 4-coumarate-CoA ligase 1.